Reading from the N-terminus, the 127-residue chain is Glycine cleavage system H protein (127 aa).

The 83-residue stretch at 24–106 (TVTVGITDHA…FEGAWIAKIK (83 aa)) folds into the Lipoyl-binding domain. The residue at position 65 (Lys65) is an N6-lipoyllysine.

This sequence belongs to the GcvH family. In terms of assembly, the glycine cleavage system is composed of four proteins: P, T, L and H. (R)-lipoate serves as cofactor.

Functionally, the glycine cleavage system catalyzes the degradation of glycine. The H protein shuttles the methylamine group of glycine from the P protein to the T protein. This chain is Glycine cleavage system H protein, found in Marinomonas sp. (strain MWYL1).